Consider the following 328-residue polypeptide: Nickel import system permease protein NikB (328 aa).

The next 6 membrane-spanning stretches (helical) occupy residues 11-31 (LMQMIVVLFVISTLTFILMKL), 104-124 (LLISFSTLVVSLCISIPLGII), 139-159 (VISTLSISLPAFFIGIILLFI), 170-190 (ILSQFILPVITLSLGMCAYII), 229-249 (ILPIIPLLGISLGSLIGGTVV), and 279-299 (VLFIGFFVVIINTIADLLTLL). The ABC transmembrane type-1 domain maps to 100–297 (APITLLISFS…IINTIADLLT (198 aa)).

This sequence belongs to the binding-protein-dependent transport system permease family. OppBC subfamily. The complex is composed of two ATP-binding proteins (NikD and NikE), two transmembrane proteins (NikB and NikC) and a solute-binding protein (NikA).

Its subcellular location is the cell membrane. Functionally, part of the ABC transporter complex NikABCDE (Opp2) involved in nickel import. Probably responsible for the translocation of the substrate across the membrane. The protein is Nickel import system permease protein NikB of Staphylococcus aureus (strain USA300).